Consider the following 445-residue polypeptide: MEGGGDDDGGRSRAEAIMRELERLRAEREELDGRIRLLESQLRLGAAPLPPSAAAEVEPTGSPSSSSSAAADMISRYRRHLLLPQFGLEGQRKLSQSSILVVGAGGLGSPVAMYLAACGVGCLGIVDGDRVELDNLHRQIIHIEAYVGQPKVKSTAASCRAYDIVVDATNNLPSRYMISDCCVLMNKPLISGSAVGLEGQLTVYHHNGSPCYRCLYPNPPSSPTSQSCSDNGILGILPGVIGCLQALEAIKVATAVGKPLCGRMLHFDALSSHTRIVKISRSSPTCKVCGENPVFTKEDFVNFDYESFTQSPMSKNSTTRSLNLLPENARVSCRDYKKVLDSGRPHLLVDVRPSHHFQIASMAHSINVPLSLLEEKLPLLRDSAREVSSRRDGRQHCPVYVICRRGNDSQVAVQILRENGFLYASDVAGGFESWAKEVDPSFLLY.

The segment at 49 to 70 is disordered; it reads LPPSAAAEVEPTGSPSSSSSAA. ATP contacts are provided by residues G106, D127, 134–138, K151, and 170–171; these read DNLHR and NN. 2 residues coordinate Zn(2+): C211 and C214. Catalysis depends on C228, which acts as the Glycyl thioester intermediate; for adenylyltransferase activity. Residues C286 and C289 each coordinate Zn(2+). Residues 342–443 form the Rhodanese domain; that stretch reads SGRPHLLVDV…WAKEVDPSFL (102 aa). Catalysis depends on C403, which acts as the Cysteine persulfide intermediate; for sulfurtransferase activity.

The protein in the N-terminal section; belongs to the HesA/MoeB/ThiF family. UBA4 subfamily. Requires Zn(2+) as cofactor.

Its subcellular location is the cytoplasm. The protein resides in the cytosol. The catalysed reaction is [molybdopterin-synthase sulfur-carrier protein]-C-terminal Gly-Gly + ATP + H(+) = [molybdopterin-synthase sulfur-carrier protein]-C-terminal Gly-Gly-AMP + diphosphate. It carries out the reaction [molybdopterin-synthase sulfur-carrier protein]-C-terminal Gly-Gly-AMP + S-sulfanyl-L-cysteinyl-[cysteine desulfurase] + AH2 = [molybdopterin-synthase sulfur-carrier protein]-C-terminal-Gly-aminoethanethioate + L-cysteinyl-[cysteine desulfurase] + A + AMP + 2 H(+). Its pathway is tRNA modification; 5-methoxycarbonylmethyl-2-thiouridine-tRNA biosynthesis. It functions in the pathway cofactor biosynthesis; molybdopterin biosynthesis. Plays a central role in 2-thiolation of mcm(5)S(2)U at tRNA wobble positions of cytosolic tRNA(Lys), tRNA(Glu) and tRNA(Gln). Also essential during biosynthesis of the molybdenum cofactor. Acts by mediating the C-terminal thiocarboxylation of sulfur carriers URM1 and MOCS2A. Its N-terminus first activates URM1 and MOCS2A as acyl-adenylates (-COAMP), then the persulfide sulfur on the catalytic cysteine is transferred to URM1 and MOCS2A to form thiocarboxylation (-COSH) of their C-terminus. The reaction probably involves hydrogen sulfide that is generated from the persulfide intermediate and that acts as a nucleophile towards URM1 and MOCS2A. Subsequently, a transient disulfide bond is formed. Does not use thiosulfate as sulfur donor; NFS1 probably acting as a sulfur donor for thiocarboxylation reactions. The chain is Adenylyltransferase and sulfurtransferase MOCS3 from Oryza sativa subsp. japonica (Rice).